The following is a 207-amino-acid chain: Large ribosomal subunit protein uL4 (207 aa).

Residues 44 to 78 form a disordered region; it reads MRQGTHKTKNRAEVSGGGRKPWRQKGTGRARQGSI.

Belongs to the universal ribosomal protein uL4 family. As to quaternary structure, part of the 50S ribosomal subunit.

Functionally, one of the primary rRNA binding proteins, this protein initially binds near the 5'-end of the 23S rRNA. It is important during the early stages of 50S assembly. It makes multiple contacts with different domains of the 23S rRNA in the assembled 50S subunit and ribosome. Its function is as follows. Forms part of the polypeptide exit tunnel. In Geobacillus kaustophilus (strain HTA426), this protein is Large ribosomal subunit protein uL4.